Here is a 76-residue protein sequence, read N- to C-terminus: Transcription attenuation protein MtrB (76 aa).

The protein belongs to the MtrB family. Oligomer of 11 identical subunits arranged in doughnut-like structure.

Required for transcription attenuation control in the Trp operon. This trans-acting factor seems to recognize a 10 bases nucleotide sequence in the Trp leader transcript causing transcription termination. Binds the leader RNA only in presence of L-tryptophan. This is Transcription attenuation protein MtrB (mtrB) from Bacillus pumilus (Bacillus mesentericus).